Consider the following 375-residue polypeptide: Phytanoyl-CoA hydroxylase-interacting protein-like (375 aa).

A phosphoserine mark is found at Ser-11, Ser-12, and Ser-15. Residue Asn-22 is glycosylated (N-linked (GlcNAc...) asparagine). Ser-24 is modified (phosphoserine). N-linked (GlcNAc...) asparagine glycosylation occurs at Asn-36. Residues 51 to 160 enclose the Fibronectin type-III domain; the sequence is VPHNIKINNI…EIIEFCTADY (110 aa).

It belongs to the PHYHIP family.

Functionally, may play a role in the development of the central system. This chain is Phytanoyl-CoA hydroxylase-interacting protein-like (Phyhipl), found in Mus musculus (Mouse).